We begin with the raw amino-acid sequence, 746 residues long: Double-stranded RNA-specific editase B2 (746 aa).

Disordered regions lie at residues 1 to 36 and 50 to 105; these read MASV…KDKV and SPGT…PLEE. The span at 20–34 shows a compositional bias: basic residues; sequence CKSKRRRRRRSKRKD. The R-domain (ssRNA-binding) stretch occupies residues 23–35; that stretch reads KRRRRRRSKRKDK. DRBM domains lie at 126-192 and 284-348; these read TPKN…SFVQ and NPVV…ALFD. The A to I editase domain maps to 415–742; that stretch reads VLSSGTKCIS…VRKPPEQDQF (328 aa). Residue His-439 coordinates Zn(2+). The active-site Proton donor is the Glu-441. Zn(2+) is bound by residues Cys-497 and Cys-562.

As to expression, brain specific.

It localises to the nucleus. Functionally, lacks editing activity. It prevents the binding of other ADAR enzymes to targets in vitro, and decreases the efficiency of these enzymes. Capable of binding to dsRNA but also to ssRNA. The protein is Double-stranded RNA-specific editase B2 (Adarb2) of Rattus norvegicus (Rat).